A 952-amino-acid polypeptide reads, in one-letter code: UvrABC system protein A (952 aa).

31–38 is a binding site for ATP; sequence GVSGSGKS. The segment at 253–280 adopts a C4-type zinc-finger fold; sequence CPEHGSVLEELEPRIFSFNSPYGACPAC. 2 ABC transporter domains span residues 309–591 and 611–938; these read WSRG…PQSL and GNGK…AFLA. ATP is bound at residue 643–650; it reads GPSGSGKS. The C4-type zinc finger occupies 742 to 768; it reads CEACGGDGTVKIEMLFLPDLYVPCEVC.

The protein belongs to the ABC transporter superfamily. UvrA family. As to quaternary structure, forms a heterotetramer with UvrB during the search for lesions.

It is found in the cytoplasm. The UvrABC repair system catalyzes the recognition and processing of DNA lesions. UvrA is an ATPase and a DNA-binding protein. A damage recognition complex composed of 2 UvrA and 2 UvrB subunits scans DNA for abnormalities. When the presence of a lesion has been verified by UvrB, the UvrA molecules dissociate. The protein is UvrABC system protein A of Thermus thermophilus (strain ATCC 27634 / DSM 579 / HB8).